We begin with the raw amino-acid sequence, 333 residues long: HTH-type transcriptional repressor PurR (333 aa).

The HTH lacI-type domain maps to 2–56 (ATIKDVAKLASVSTTTVSHVINKTRFVAEATQKRVWEAVEELNYAPSAVARSLKC). Residues 4-23 (IKDVAKLASVSTTTVSHVIN) constitute a DNA-binding region (H-T-H motif). The DNA-binding element occupies 48–56 (SAVARSLKC). Hypoxanthine-binding residues include Phe-73, Lys-189, Thr-191, Phe-220, and Asp-274.

Homodimer.

It functions in the pathway purine metabolism; purine nucleotide biosynthesis [regulation]. In terms of biological role, is the main repressor of the genes involved in the de novo synthesis of purine nucleotides, regulating purB, purC, purEK, purF, purHD, purL, purMN and guaBA expression. PurR is allosterically activated to bind its cognate DNA by binding the purine corepressors, hypoxanthine or guanine, thereby effecting transcription repression. This chain is HTH-type transcriptional repressor PurR, found in Aliivibrio salmonicida (strain LFI1238) (Vibrio salmonicida (strain LFI1238)).